We begin with the raw amino-acid sequence, 526 residues long: DDB1- and CUL4-associated factor 17 (526 aa).

A run of 2 helical transmembrane segments spans residues 200–220 and 237–257; these read ILMRVAAFQVFPLQLVGMLEI and GVLAVSHSSKLVRLYSFEYIV.

It localises to the membrane. The protein localises to the nucleus. The protein resides in the nucleolus. It participates in protein modification; protein ubiquitination. Its function is as follows. May function as a substrate receptor for CUL4-DDB1 E3 ubiquitin-protein ligase complex. This Danio rerio (Zebrafish) protein is DDB1- and CUL4-associated factor 17 (dcaf17).